Here is a 465-residue protein sequence, read N- to C-terminus: Argininosuccinate lyase (465 aa).

Belongs to the lyase 1 family. Argininosuccinate lyase subfamily.

The protein resides in the cytoplasm. It carries out the reaction 2-(N(omega)-L-arginino)succinate = fumarate + L-arginine. It functions in the pathway amino-acid biosynthesis; L-arginine biosynthesis; L-arginine from L-ornithine and carbamoyl phosphate: step 3/3. In Methanosphaera stadtmanae (strain ATCC 43021 / DSM 3091 / JCM 11832 / MCB-3), this protein is Argininosuccinate lyase.